The primary structure comprises 201 residues: Glutathione peroxidase 1 (201 aa).

S32 is subject to Phosphoserine. U47 is a catalytic residue. A non-standard amino acid (selenocysteine) is located at residue U47. K86, K112, and K146 each carry N6-acetyllysine; alternate. K86, K112, and K146 each carry N6-succinyllysine; alternate. A phosphoserine mark is found at S195 and S199.

It belongs to the glutathione peroxidase family. In terms of assembly, homotetramer. Interacts with MIEN1. Post-translationally, during periods of oxidative stress, Sec-47 may react with a superoxide radical, irreversibly lose hydroselenide and be converted to dehydroalanine.

The protein localises to the cytoplasm. The catalysed reaction is 2 glutathione + H2O2 = glutathione disulfide + 2 H2O. It catalyses the reaction (12S)-hydroperoxy-(5Z,8Z,10E,14Z)-eicosatetraenoate + 2 glutathione = (12S)-hydroxy-(5Z,8Z,10E,14Z)-eicosatetraenoate + glutathione disulfide + H2O. In terms of biological role, protects the hemoglobin in erythrocytes from oxidative breakdown. In platelets, plays a crucial role of glutathione peroxidase in the arachidonic acid metabolism. This Hylobates lar (Lar gibbon) protein is Glutathione peroxidase 1 (GPX1).